The chain runs to 212 residues: Adenylate kinase (212 aa).

An ATP-binding site is contributed by 14–19 (GSGKGT). Residues 34-63 (STGDLFRKKISEDSRFAAQIQNYLSSGSYV) form an NMP region. Residues Thr-35, Arg-40, 61 to 63 (SYV), 89 to 92 (GYPR), and Gln-96 contribute to the AMP site. Residues 126–163 (QRLFCQKCQKSYNLLLAKPKNGLKCDLDNTDLITRNDD) are LID. Arg-127 serves as a coordination point for ATP. The Zn(2+) site is built by Cys-130 and Cys-133. 136-137 (SY) lines the ATP pocket. Zn(2+) contacts are provided by Cys-150 and Asp-153. 2 residues coordinate AMP: Arg-160 and Arg-171. Position 199 (Gln-199) interacts with ATP.

Belongs to the adenylate kinase family. In terms of assembly, monomer.

Its subcellular location is the cytoplasm. The enzyme catalyses AMP + ATP = 2 ADP. Its pathway is purine metabolism; AMP biosynthesis via salvage pathway; AMP from ADP: step 1/1. Functionally, catalyzes the reversible transfer of the terminal phosphate group between ATP and AMP. Plays an important role in cellular energy homeostasis and in adenine nucleotide metabolism. The protein is Adenylate kinase of Mesomycoplasma hyopneumoniae (strain 232) (Mycoplasma hyopneumoniae).